The primary structure comprises 888 residues: 3-hydroxy-3-methylglutaryl-coenzyme A reductase (888 aa).

Over 1–9 (MLSRLFRMH) the chain is Cytoplasmic. The chain crosses the membrane as a helical span at residues 10–39 (GLFVASHPWEVIVGTVTLTICMMSMNMFTG). At 40–56 (NNKICGWNYECPKFEED) the chain is on the lumenal side. A helical transmembrane segment spans residues 57–78 (VLSSDIIILTITRCIAILYIYF). Residues 61–218 (DIIILTITRC…MTFFPACVSL (158 aa)) enclose the SSD domain. Residues 75–78 (YIYF) carry the INSIG-binding motif motif. The Cytoplasmic portion of the chain corresponds to 79 to 89 (QFQNLRQLGSK). Residue Lys-89 forms a Glycyl lysine isopeptide (Lys-Gly) (interchain with G-Cter in ubiquitin) linkage. The helical transmembrane segment at 90-114 (YILGIAGLFTIFSSFVFSTVVIHFL) threads the bilayer. Over 115 to 123 (DKELTGLNE) the chain is Lumenal. The chain crosses the membrane as a helical span at residues 124–149 (ALPFFLLLIDLSRASTLAKFALSSNS). Over 150–159 (QDEVRENIAR) the chain is Cytoplasmic. The helical transmembrane segment at 160–187 (GMAILGPTFTLDALVECLVIGVGTMSGV) threads the bilayer. The Lumenal segment spans residues 188-191 (RQLE). Residues 192-220 (IMCCFGCMSVLANYFVFMTFFPACVSLVL) form a helical membrane-spanning segment. Residues 221–248 (ELSRESREGRPIWLLSHFARVLEEEENK) lie on the Cytoplasmic side of the membrane. A Glycyl lysine isopeptide (Lys-Gly) (interchain with G-Cter in ubiquitin) cross-link involves residue Lys-248. Residues 249 to 275 (PNPVTQRVKMIMSLGLVLVHAHSRWIA) form a helical membrane-spanning segment. Residues 276–314 (DPSPQNSTADTSKVSLGLDENVSKRIEPSVSLWQFYLSK) lie on the Lumenal side of the membrane. Residues Asn-281 and Asn-296 are each glycosylated (N-linked (GlcNAc...) asparagine). A helical membrane pass occupies residues 315 to 339 (MISMDIEQVITLSLALLLAVKYIFF). Residues 340–888 (EQTETESTLS…LQGACTKKTA (549 aa)) lie on the Cytoplasmic side of the membrane. Residues Glu-559, Lys-691, and Asp-767 each act as charge relay system in the active site. Catalysis depends on His-866, which acts as the Proton donor. At Ser-872 the chain carries Phosphoserine; by AMPK.

It belongs to the HMG-CoA reductase family. Homotetramer. Homodimer. Interacts (via its SSD) with INSIG1; the interaction, accelerated by sterols, leads to the recruitment of HMGCR to AMFR/gp78 for its ubiquitination by the sterol-mediated ERAD pathway. Interacts with UBIAD1. Undergoes sterol-mediated ubiquitination and ER-associated degradation (ERAD). Accumulation of sterols in the endoplasmic reticulum (ER) membrane, triggers binding of the reductase to the ER membrane protein INSIG1 or INSIG2. The INSIG1 binding leads to the recruitment of the ubiquitin ligase, AMFR/gp78, RNF139 or RNF145, initiating ubiquitination of the reductase. The ubiquitinated reductase is then extracted from the ER membrane and delivered to cytosolic 26S proteosomes by a mechanism probably mediated by the ATPase Valosin-containing protein VCP/p97. The INSIG2-binding leads to the recruitment of the ubiquitin ligase RNF139, initiating ubiquitination of the reductase. Lys-248 is the main site of ubiquitination. Ubiquitination is enhanced by the presence of a geranylgeranylated protein. In terms of processing, N-glycosylated. Deglycosylated by NGLY1 on release from the endoplasmic reticulum (ER) in a sterol-mediated manner. Post-translationally, phosphorylated. Phosphorylation at Ser-872 reduces the catalytic activity.

Its subcellular location is the endoplasmic reticulum membrane. It is found in the peroxisome membrane. It catalyses the reaction (R)-mevalonate + 2 NADP(+) + CoA = (3S)-3-hydroxy-3-methylglutaryl-CoA + 2 NADPH + 2 H(+). It functions in the pathway metabolic intermediate biosynthesis; (R)-mevalonate biosynthesis; (R)-mevalonate from acetyl-CoA: step 3/3. With respect to regulation, regulated by a negative feedback mechanism through sterols and non-sterol metabolites derived from mevalonate. Phosphorylation at Ser-872 down-regulates the catalytic activity. Its function is as follows. Catalyzes the conversion of (3S)-hydroxy-3-methylglutaryl-CoA (HMG-CoA) to mevalonic acid, the rate-limiting step in the synthesis of cholesterol and other isoprenoids, thus plays a critical role in cellular cholesterol homeostasis. The polypeptide is 3-hydroxy-3-methylglutaryl-coenzyme A reductase (HMGCR) (Pongo abelii (Sumatran orangutan)).